The sequence spans 355 residues: DNA-directed RNA polymerase subunit alpha (355 aa).

The alpha N-terminal domain (alpha-NTD) stretch occupies residues 1-248 (MYYNNDVSLC…EQLQPFISSD (248 aa)). The alpha C-terminal domain (alpha-CTD) stretch occupies residues 267 to 355 (YDPVLLRKVD…ELAKQHTDED (89 aa)).

Belongs to the RNA polymerase alpha chain family. In terms of assembly, homodimer. The RNAP catalytic core consists of 2 alpha, 1 beta, 1 beta' and 1 omega subunit. When a sigma factor is associated with the core the holoenzyme is formed, which can initiate transcription.

It carries out the reaction RNA(n) + a ribonucleoside 5'-triphosphate = RNA(n+1) + diphosphate. DNA-dependent RNA polymerase catalyzes the transcription of DNA into RNA using the four ribonucleoside triphosphates as substrates. This chain is DNA-directed RNA polymerase subunit alpha, found in Wolbachia pipientis wMel.